Consider the following 68-residue polypeptide: Conotoxin mr3g (68 aa).

Positions 1–19 (MSKLGVLLTICLLLFALTA) are cleaved as a signal peptide. The propeptide occupies 20–51 (VPLDGDQPADRPAERMQDDISSERHPMFDAVR). 3 disulfides stabilise this stretch: Cys-53–Cys-67, Cys-54–Cys-63, and Cys-59–Cys-66. Pro-55 and Pro-65 each carry 4-hydroxyproline. Cys-67 is subject to Cysteine amide.

As to expression, expressed by the venom duct.

The protein resides in the secreted. In terms of biological role, intracranially injection into mice does not elicit symptoms. The polypeptide is Conotoxin mr3g (Conus marmoreus (Marble cone)).